The sequence spans 360 residues: Histidinol-phosphate aminotransferase (360 aa).

K208 carries the N6-(pyridoxal phosphate)lysine modification.

This sequence belongs to the class-II pyridoxal-phosphate-dependent aminotransferase family. Histidinol-phosphate aminotransferase subfamily. Homodimer. Pyridoxal 5'-phosphate serves as cofactor.

The enzyme catalyses L-histidinol phosphate + 2-oxoglutarate = 3-(imidazol-4-yl)-2-oxopropyl phosphate + L-glutamate. It functions in the pathway amino-acid biosynthesis; L-histidine biosynthesis; L-histidine from 5-phospho-alpha-D-ribose 1-diphosphate: step 7/9. This is Histidinol-phosphate aminotransferase (hisC) from Lactococcus lactis subsp. lactis (strain IL1403) (Streptococcus lactis).